The primary structure comprises 242 residues: Host range factor p28 (242 aa).

Residues 21–131 (YIDEPNDIRL…QSILRGLVNW (111 aa)) enclose the KilA-N domain. The RING-type zinc-finger motif lies at 173–226 (CGICYEVVYSKRLENDRYFGLLDSCNHIFCITCINIWHRTRRETGASDNCPICR).

Belongs to the orthopoxvirus OPG021 family.

Its subcellular location is the host cytoplasm. It catalyses the reaction S-ubiquitinyl-[E2 ubiquitin-conjugating enzyme]-L-cysteine + [acceptor protein]-L-lysine = [E2 ubiquitin-conjugating enzyme]-L-cysteine + N(6)-ubiquitinyl-[acceptor protein]-L-lysine.. Functionally, RING-finger E3 ubiquitin ligase which catalyzes the formation of both 'Lys-48'- and 'Lys-63'-linked polyubiquitin chains. Plays an important role in virulence by acting as an anti-apoptotic factor. This is Host range factor p28 (OPG021) from Cowpox virus (strain Brighton Red) (CPV).